Consider the following 197-residue polypeptide: dITP/XTP pyrophosphatase (197 aa).

8 to 13 (TGNVGK) provides a ligand contact to substrate. Mg(2+)-binding residues include Glu40 and Asp69. The active-site Proton acceptor is Asp69. Substrate contacts are provided by residues Ser70, 154-157 (FGYD), Lys177, and 182-183 (HR).

The protein belongs to the HAM1 NTPase family. As to quaternary structure, homodimer. Mg(2+) is required as a cofactor. Mn(2+) serves as cofactor. It depends on Ni(2+) as a cofactor.

It carries out the reaction XTP + H2O = XMP + diphosphate + H(+). The enzyme catalyses dITP + H2O = dIMP + diphosphate + H(+). It catalyses the reaction ITP + H2O = IMP + diphosphate + H(+). Pyrophosphatase that catalyzes the hydrolysis of nucleoside triphosphates to their monophosphate derivatives, with a high preference for the non-canonical purine nucleotides XTP (xanthosine triphosphate), dITP (deoxyinosine triphosphate) and ITP. Can also efficiently hydrolyze 2'-deoxy-N-6-hydroxylaminopurine triphosphate (dHAPTP). Seems to function as a house-cleaning enzyme that removes non-canonical purine nucleotides from the nucleotide pool, thus preventing their incorporation into DNA/RNA and avoiding chromosomal lesions. To a much lesser extent, is also able to hydrolyze GTP, dGTP and dUTP, but shows very low activity toward the canonical nucleotides dATP, dCTP and dTTP and toward 8-oxo-dGTP, purine deoxyribose triphosphate, 2-aminopurine deoxyribose triphosphate and 2,6-diaminopurine deoxyribose triphosphate. In terms of biological role, genetic interactions among priB, dam, lexA, nagC, polA, rdgB, rdgB, rep and uup link the PriA-PriB replication restart pathway to DNA double-strand break repair. The sequence is that of dITP/XTP pyrophosphatase from Escherichia coli (strain K12).